A 62-amino-acid chain; its full sequence is Dual specificity mitogen-activated protein kinase kinase 3 (62 aa).

In terms of domain architecture, Protein kinase spans 1 to 62 (GKIAVSIVKA…VAKTMDAGCK (62 aa)).

It belongs to the protein kinase superfamily. STE Ser/Thr protein kinase family. MAP kinase kinase subfamily. Post-translationally, activated by phosphorylation on Ser/Thr catalyzed by MAP kinase kinase kinases.

It carries out the reaction L-seryl-[protein] + ATP = O-phospho-L-seryl-[protein] + ADP + H(+). The catalysed reaction is L-threonyl-[protein] + ATP = O-phospho-L-threonyl-[protein] + ADP + H(+). It catalyses the reaction L-tyrosyl-[protein] + ATP = O-phospho-L-tyrosyl-[protein] + ADP + H(+). Its function is as follows. Catalyzes the concomitant phosphorylation of a threonine and a tyrosine residue in a Thr-Glu-Tyr sequence located in MAP kinases. This chain is Dual specificity mitogen-activated protein kinase kinase 3 (map2k3), found in Xenopus laevis (African clawed frog).